A 259-amino-acid polypeptide reads, in one-letter code: Peptide methionine sulfoxide reductase (259 aa).

A disordered region spans residues 66 to 90; it reads TRTPADASMDQSSIAQGPDDDIPAP.

The protein belongs to the MsrA Met sulfoxide reductase family.

The catalysed reaction is L-methionyl-[protein] + [thioredoxin]-disulfide + H2O = L-methionyl-(S)-S-oxide-[protein] + [thioredoxin]-dithiol. It catalyses the reaction [thioredoxin]-disulfide + L-methionine + H2O = L-methionine (S)-S-oxide + [thioredoxin]-dithiol. Has an important function as a repair enzyme for proteins that have been inactivated by oxidation. Catalyzes the reversible oxidation-reduction of methionine sulfoxide in proteins to methionine. This Lactuca sativa (Garden lettuce) protein is Peptide methionine sulfoxide reductase.